The chain runs to 417 residues: Protein translocase subunit SecD (417 aa).

The next 6 helical transmembrane spans lie at 9-29, 236-256, 258-278, 288-308, 333-353, and 360-380; these read LLVS…PLVS, ASMK…LLYY, LSGL…LAVM, PGMA…VLIF, FTTI…LFYL, and GFAV…VTVT.

Belongs to the SecD/SecF family. SecD subfamily. In terms of assembly, forms a complex with SecF. Part of the essential Sec protein translocation apparatus which comprises SecA, SecYEG and auxiliary proteins SecDF. Other proteins may also be involved.

Its subcellular location is the cell membrane. Functionally, part of the Sec protein translocase complex. Interacts with the SecYEG preprotein conducting channel. SecDF uses the proton motive force (PMF) to complete protein translocation after the ATP-dependent function of SecA. The polypeptide is Protein translocase subunit SecD (Acidaminococcus fermentans (strain ATCC 25085 / DSM 20731 / CCUG 9996 / CIP 106432 / VR4)).